The sequence spans 144 residues: Bacilliredoxin BCE33L1972 (144 aa).

It belongs to the bacilliredoxin family.

This Bacillus cereus (strain ZK / E33L) protein is Bacilliredoxin BCE33L1972.